We begin with the raw amino-acid sequence, 166 residues long: Small ribosomal subunit protein uS5 (166 aa).

An S5 DRBM domain is found at 12-75; it reads YIEKLVQVNR…EAARRNMIQV (64 aa).

Belongs to the universal ribosomal protein uS5 family. In terms of assembly, part of the 30S ribosomal subunit. Contacts proteins S4 and S8.

Functionally, with S4 and S12 plays an important role in translational accuracy. Located at the back of the 30S subunit body where it stabilizes the conformation of the head with respect to the body. The polypeptide is Small ribosomal subunit protein uS5 (Pseudomonas fluorescens (strain SBW25)).